The following is an 88-amino-acid chain: Arminin 1a (88 aa).

Residues 1–18 form the signal peptide; it reads MKTVLAFLFLPFIAFTHA. The propeptide occupies 19–57; sequence ESYEDVKEEIKNEAEKEIFEDLEEESDALDSSVREFNDA. The residue at position 85 (V85) is a Valine amide.

The protein belongs to the arminin family. As to expression, expressed in entodermal epithelium along the body column.

It localises to the secreted. Its subcellular location is the target cell membrane. Functionally, antimicrobial peptide with a broad-spectrum antimicrobial activity. Shows very strong bactericidal activity against B.megaterium (MBC=0.1 uM), E.coli (MBC=0.2 uM), S.aureus (MBC=0.4 uM), methicillin-resistant S.aureus (MRSA) (MBC=0.4-0.8 uM), vancomycin-resistant enterococci (VRE) (E.faecalis (MBC=1.6 uM), and E.faecium (MBC=0.4-0.8 uM)), and extended-spectrum beta-lactamase (ESBL)-producing enterobacteriaceae strains (K.pneumoniae (MBC=0.4-0.8 uM), E.coli (MBC=0.2-0.4 uM)). Keeps its antibacterial activity under a wide range of salt concentrations that mimic physiological conditions of human blood, which is surprising, since Hydra is an obligate freshwater animal with nearly no salt tolerance. Does not affect red blood cells. This chain is Arminin 1a, found in Hydra vulgaris (Hydra).